A 225-amino-acid polypeptide reads, in one-letter code: PKHD-type hydroxylase YbiX (225 aa).

The region spanning 78-177 (TLSTPLFNRY…RVASFMWIQS (100 aa)) is the Fe2OG dioxygenase domain. The Fe cation site is built by His-96, Asp-98, and His-158. Arg-168 contributes to the 2-oxoglutarate binding site.

Fe(2+) serves as cofactor. Requires L-ascorbate as cofactor.

This is PKHD-type hydroxylase YbiX from Escherichia coli O8 (strain IAI1).